Here is a 135-residue protein sequence, read N- to C-terminus: HTH-type transcriptional regulator DicA (135 aa).

Residues 12-66 enclose the HTH cro/C1-type domain; it reads IRYRRKNLKHTQRSLAKALKISHVSVSQWERGDSEPTGKNLFALSKVLQCSPTWI. Residues 23–42 constitute a DNA-binding region (H-T-H motif); that stretch reads QRSLAKALKISHVSVSQWER.

In terms of biological role, this protein is a repressor of division inhibition gene dicB. The protein is HTH-type transcriptional regulator DicA (dicA) of Escherichia coli (strain K12).